Here is a 146-residue protein sequence, read N- to C-terminus: MKLHELKPTPGSRHERNRVGRGMATGNGKTSGRGHKGQKARSGGGVRPGFEGGQNPLYRRLPKRGFNNPTRKEYAVVSLDTLNRFEAGTEVTPELLIETGVVSSAKDGIKVLANGKLETKLTVKANKFSGAAKEAIEAAGGTVEVI.

Over residues 1-18 (MKLHELKPTPGSRHERNR) the composition is skewed to basic and acidic residues. The tract at residues 1–69 (MKLHELKPTP…RLPKRGFNNP (69 aa)) is disordered. The segment covering 42–52 (SGGGVRPGFEG) has biased composition (gly residues).

It belongs to the universal ribosomal protein uL15 family. Part of the 50S ribosomal subunit.

Binds to the 23S rRNA. The sequence is that of Large ribosomal subunit protein uL15 from Exiguobacterium sp. (strain ATCC BAA-1283 / AT1b).